The primary structure comprises 376 residues: ATP phosphoribosyltransferase regulatory subunit (376 aa).

The protein belongs to the class-II aminoacyl-tRNA synthetase family. HisZ subfamily. In terms of assembly, heteromultimer composed of HisG and HisZ subunits.

It localises to the cytoplasm. It functions in the pathway amino-acid biosynthesis; L-histidine biosynthesis; L-histidine from 5-phospho-alpha-D-ribose 1-diphosphate: step 1/9. Required for the first step of histidine biosynthesis. May allow the feedback regulation of ATP phosphoribosyltransferase activity by histidine. The sequence is that of ATP phosphoribosyltransferase regulatory subunit from Brucella ovis (strain ATCC 25840 / 63/290 / NCTC 10512).